A 505-amino-acid chain; its full sequence is Deoxyguanosinetriphosphate triphosphohydrolase (505 aa).

The HD domain occupies 66-273 (RLTHSMEVQQ…MEAADDISYC (208 aa)).

The protein belongs to the dGTPase family. Type 1 subfamily. In terms of assembly, homotetramer. The cofactor is Mg(2+).

The catalysed reaction is dGTP + H2O = 2'-deoxyguanosine + triphosphate + H(+). Its function is as follows. dGTPase preferentially hydrolyzes dGTP over the other canonical NTPs. This is Deoxyguanosinetriphosphate triphosphohydrolase from Escherichia coli O139:H28 (strain E24377A / ETEC).